The following is a 285-amino-acid chain: Bifunctional protein FolD (285 aa).

Residues 164–166 (GAS), Ile-189, and Ile-230 each bind NADP(+).

The protein belongs to the tetrahydrofolate dehydrogenase/cyclohydrolase family. As to quaternary structure, homodimer.

It catalyses the reaction (6R)-5,10-methylene-5,6,7,8-tetrahydrofolate + NADP(+) = (6R)-5,10-methenyltetrahydrofolate + NADPH. The catalysed reaction is (6R)-5,10-methenyltetrahydrofolate + H2O = (6R)-10-formyltetrahydrofolate + H(+). It functions in the pathway one-carbon metabolism; tetrahydrofolate interconversion. Functionally, catalyzes the oxidation of 5,10-methylenetetrahydrofolate to 5,10-methenyltetrahydrofolate and then the hydrolysis of 5,10-methenyltetrahydrofolate to 10-formyltetrahydrofolate. This chain is Bifunctional protein FolD, found in Sulfurimonas denitrificans (strain ATCC 33889 / DSM 1251) (Thiomicrospira denitrificans (strain ATCC 33889 / DSM 1251)).